The chain runs to 876 residues: Alanine--tRNA ligase (876 aa).

Histidine 564, histidine 568, cysteine 666, and histidine 670 together coordinate Zn(2+).

Belongs to the class-II aminoacyl-tRNA synthetase family. As to quaternary structure, homotetramer. Zn(2+) is required as a cofactor.

The protein resides in the cytoplasm. It carries out the reaction tRNA(Ala) + L-alanine + ATP = L-alanyl-tRNA(Ala) + AMP + diphosphate. In terms of biological role, catalyzes the attachment of alanine to tRNA(Ala) in a two-step reaction: alanine is first activated by ATP to form Ala-AMP and then transferred to the acceptor end of tRNA(Ala). Also edits incorrectly charged Ser-tRNA(Ala) and Gly-tRNA(Ala) via its editing domain. This chain is Alanine--tRNA ligase, found in Salmonella choleraesuis (strain SC-B67).